A 326-amino-acid chain; its full sequence is DNA polymerase III subunit delta' (326 aa).

As to quaternary structure, DNA polymerase III contains a core (composed of alpha, epsilon and theta chains) that associates with a tau subunit. This core dimerizes to form the POLIII' complex. PolIII' associates with the gamma complex (composed of gamma, delta, delta', psi and chi chains) and with the beta chain to form the complete DNA polymerase III complex.

It carries out the reaction DNA(n) + a 2'-deoxyribonucleoside 5'-triphosphate = DNA(n+1) + diphosphate. Functionally, DNA polymerase III is a complex, multichain enzyme responsible for most of the replicative synthesis in bacteria. This DNA polymerase also exhibits 3' to 5' exonuclease activity. The sequence is that of DNA polymerase III subunit delta' (holB) from Buchnera aphidicola subsp. Acyrthosiphon pisum (strain APS) (Acyrthosiphon pisum symbiotic bacterium).